We begin with the raw amino-acid sequence, 395 residues long: Elongation factor Tu (395 aa).

The tr-type G domain occupies 10–204 (KPHLNIGTIG…AVDNWIEEPV (195 aa)). A G1 region spans residues 19 to 26 (GHVDHGKT). 19–26 (GHVDHGKT) is a binding site for GTP. Residue Thr26 participates in Mg(2+) binding. Residues 60–64 (GITIN) are G2. The interval 81–84 (DCPG) is G3. Residues 81–85 (DCPGH) and 136–139 (NKVD) contribute to the GTP site. A G4 region spans residues 136-139 (NKVD). The segment at 174 to 176 (SAL) is G5.

This sequence belongs to the TRAFAC class translation factor GTPase superfamily. Classic translation factor GTPase family. EF-Tu/EF-1A subfamily. Monomer.

It is found in the cytoplasm. It catalyses the reaction GTP + H2O = GDP + phosphate + H(+). In terms of biological role, GTP hydrolase that promotes the GTP-dependent binding of aminoacyl-tRNA to the A-site of ribosomes during protein biosynthesis. The chain is Elongation factor Tu from Flavobacterium johnsoniae (strain ATCC 17061 / DSM 2064 / JCM 8514 / BCRC 14874 / CCUG 350202 / NBRC 14942 / NCIMB 11054 / UW101) (Cytophaga johnsonae).